Here is a 150-residue protein sequence, read N- to C-terminus: Macrodomain Ter protein (150 aa).

The protein belongs to the MatP family. In terms of assembly, homodimer.

The protein localises to the cytoplasm. Required for spatial organization of the terminus region of the chromosome (Ter macrodomain) during the cell cycle. Prevents early segregation of duplicated Ter macrodomains during cell division. Binds specifically to matS, which is a 13 bp signature motif repeated within the Ter macrodomain. The sequence is that of Macrodomain Ter protein from Escherichia coli (strain SMS-3-5 / SECEC).